Reading from the N-terminus, the 432-residue chain is MSELKDCPLQFHDFKSVDHVKLCPRYTAVLSRSEDDGIGIEELDTLQLELETLLSSASRRLRVLEAETQILTDWQDKKGDRRFLKLGKEHELGTPIKHSKPKKQKLDGKGSHASGPGPGRPKSRIMQQKMQEYEFTDDPVDVPRIPKNDAPNRFWASVEPYCADITNDEIKVLEDLLKTPEDEADYYKIPPLGKHYSQRWAQEDLLEEQKDGARAALSGDKKKGILGPLAELDSKDVDSLLKKSESQHDQPEDGCPFGHLTQRLLQALVEENIISPVEDSPIPEISGKESGTDGASTSPRSQNKPFSAPHTKSLEVRIKEELISQGLLESDDRPADDSEDEVLAELRKRQAELKALSAHNRAKKQELLRLAKEEMNRQELRQRVRMADNEVMDAFRKIMAARQKKRTPTKKEKDQAWKALKERESILKLLDG.

2 disordered regions span residues 90 to 124 (HELG…PKSR) and 275 to 315 (SPVE…KSLE). Polar residues predominate over residues 293–305 (DGASTSPRSQNKP). Positions 335 to 398 (ADDSEDEVLA…NEVMDAFRKI (64 aa)) form a coiled coil.

It belongs to the NGG1 family.

The protein resides in the nucleus. Functionally, functions as a component of the PCAF complex. The PCAF complex is capable of efficiently acetylating histones in a nucleosomal context. The protein is Transcriptional adapter 3-B (tada3-b) of Xenopus laevis (African clawed frog).